A 181-amino-acid polypeptide reads, in one-letter code: 3-isopropylmalate dehydratase small subunit (181 aa).

Belongs to the LeuD family. LeuD type 2 subfamily. In terms of assembly, heterodimer of LeuC and LeuD.

The catalysed reaction is (2R,3S)-3-isopropylmalate = (2S)-2-isopropylmalate. The protein operates within amino-acid biosynthesis; L-leucine biosynthesis; L-leucine from 3-methyl-2-oxobutanoate: step 2/4. Functionally, catalyzes the isomerization between 2-isopropylmalate and 3-isopropylmalate, via the formation of 2-isopropylmaleate. This chain is 3-isopropylmalate dehydratase small subunit, found in Deinococcus deserti (strain DSM 17065 / CIP 109153 / LMG 22923 / VCD115).